Here is a 106-residue protein sequence, read N- to C-terminus: Small ribosomal subunit protein bS18 (106 aa).

Residues 1-39 (MNGRNNDMGRNGGADYDDRDFGRTPDLNADAPGRRRTGR) form a disordered region.

Belongs to the bacterial ribosomal protein bS18 family. In terms of assembly, part of the 30S ribosomal subunit. Forms a tight heterodimer with protein bS6.

In terms of biological role, binds as a heterodimer with protein bS6 to the central domain of the 16S rRNA, where it helps stabilize the platform of the 30S subunit. This is Small ribosomal subunit protein bS18 from Sorangium cellulosum (strain So ce56) (Polyangium cellulosum (strain So ce56)).